The following is a 123-amino-acid chain: Small ribosomal subunit protein uS12c (123 aa).

It belongs to the universal ribosomal protein uS12 family. Part of the 30S ribosomal subunit.

Its subcellular location is the plastid. It is found in the chloroplast. With S4 and S5 plays an important role in translational accuracy. Located at the interface of the 30S and 50S subunits. The polypeptide is Small ribosomal subunit protein uS12c (rps12) (Physcomitrium patens (Spreading-leaved earth moss)).